A 334-amino-acid chain; its full sequence is Probable fructose-bisphosphate aldolase class 1 (334 aa).

Belongs to the class I fructose-bisphosphate aldolase family.

The enzyme catalyses beta-D-fructose 1,6-bisphosphate = D-glyceraldehyde 3-phosphate + dihydroxyacetone phosphate. It participates in carbohydrate degradation; glycolysis; D-glyceraldehyde 3-phosphate and glycerone phosphate from D-glucose: step 4/4. This chain is Probable fructose-bisphosphate aldolase class 1, found in Xanthomonas campestris pv. campestris (strain ATCC 33913 / DSM 3586 / NCPPB 528 / LMG 568 / P 25).